The chain runs to 355 residues: 3-isopropylmalate dehydrogenase (355 aa).

Substrate is bound by residues R90, R100, R128, and D222. Residues D222, D246, and D250 each coordinate Mg(2+). Residue 280-292 (GSAPDIAGKGIAN) coordinates NAD(+).

It belongs to the isocitrate and isopropylmalate dehydrogenases family. LeuB type 1 subfamily. In terms of assembly, homodimer. Requires Mg(2+) as cofactor. The cofactor is Mn(2+).

The protein resides in the cytoplasm. The enzyme catalyses (2R,3S)-3-isopropylmalate + NAD(+) = 4-methyl-2-oxopentanoate + CO2 + NADH. Its pathway is amino-acid biosynthesis; L-leucine biosynthesis; L-leucine from 3-methyl-2-oxobutanoate: step 3/4. Functionally, catalyzes the oxidation of 3-carboxy-2-hydroxy-4-methylpentanoate (3-isopropylmalate) to 3-carboxy-4-methyl-2-oxopentanoate. The product decarboxylates to 4-methyl-2 oxopentanoate. The chain is 3-isopropylmalate dehydrogenase from Burkholderia thailandensis (strain ATCC 700388 / DSM 13276 / CCUG 48851 / CIP 106301 / E264).